Reading from the N-terminus, the 1194-residue chain is IQ motif and SEC7 domain-containing protein 3 (1194 aa).

A coiled-coil region spans residues 20-56 (AIVQNQQSLIHTQRQRIDELERRLDELSAENRSLWEH). Disordered stretches follow at residues 62-149 (AQPP…EKER) and 229-272 (GRPS…QQPA). Pro residues predominate over residues 63 to 78 (QPPPGLVPPPSAPLPA). Over residues 79-92 (PAATAPAATAAQEP) the composition is skewed to low complexity. Positions 122 to 133 (PSSRVQTPQSPH) are enriched in polar residues. S255 carries the post-translational modification Phosphoserine. The 30-residue stretch at 311-340 (SRRAACTIQTAFRQYQLSKNFEKIRNSLLE) folds into the IQ domain. 2 disordered regions span residues 439 to 471 (SAGQ…QGHS) and 515 to 610 (PAAV…KSAK). Composition is skewed to low complexity over residues 561 to 572 (VAEAVVEEAVAT) and 600 to 610 (SSSSASTKSAK). In terms of domain architecture, SEC7 spans 646 to 839 (TLSTDTLRKR…VGIYERIQQK (194 aa)). The 134-residue stretch at 852–985 (TKVEKSIVGM…LKESIAEVTE (134 aa)) folds into the PH domain. Disordered regions lie at residues 1002-1099 (KTLS…PTPP) and 1137-1175 (SSDS…HQFC). Positions 1024–1035 (AKREAMAGEKAT) are enriched in basic and acidic residues. The span at 1036–1052 (ESSGEVSIHNRLQTFQH) shows a compositional bias: polar residues. Pro residues-rich tracts occupy residues 1064 to 1099 (APSP…PTPP) and 1159 to 1169 (PPLPPPPPPYN).

Belongs to the BRAG family. As to quaternary structure, interacts with DLG1 and DLG4. Interacts with GPHN. As to expression, expressed in brain. Localized to dendrites, as well as somas of neuronal cells.

The protein localises to the cytoplasm. It localises to the postsynaptic density. In terms of biological role, acts as a guanine nucleotide exchange factor (GEF) for ARF1. This Rattus norvegicus (Rat) protein is IQ motif and SEC7 domain-containing protein 3 (Iqsec3).